We begin with the raw amino-acid sequence, 817 residues long: Protein EFR3 homolog B (817 aa).

A phosphoserine mark is found at Ser212, Ser214, and Ser216.

This sequence belongs to the EFR3 family. Component of a phosphatidylinositol 4-kinase (PI4K) complex, composed of PI4KA, EFR3 (EFR3A or EFR3B), TTC7 (TTC7A or TTC7B) and HYCC (HYCC1 or HYCC2). Post-translationally, palmitoylated at its N-terminus, anchoring the protein to the plasma membrane. In terms of tissue distribution, widely expressed.

The protein resides in the cell membrane. The protein localises to the cytoplasm. Its subcellular location is the cytosol. Component of a complex required to localize phosphatidylinositol 4-kinase (PI4K) to the plasma membrane. The complex acts as a regulator of phosphatidylinositol 4-phosphate (PtdIns(4)P) synthesis. In the complex, EFR3B probably acts as the membrane-anchoring component. Also involved in responsiveness to G-protein-coupled receptors; it is however unclear whether this role is direct or indirect. The chain is Protein EFR3 homolog B (Efr3b) from Mus musculus (Mouse).